Reading from the N-terminus, the 862-residue chain is MTGRARARARGRARGQETVQHVGAAASQQPGYIPPRPQQSPTEGDLVGRGRQRGMVVGATSKSQELQISAGFQELSLAERGGRRRDFHDLGVNTRQNLDHVKESKTGSSGIIVKLSTNHFRLTSRPQWALYQYHIDYNPLMEARRLRSALLFQHEDLIGRCHAFDGTILFLPKRLQHKVTEVFSQTRNGEHVRITITLTNELPPTSPTCLQFYNIIFRRLLKIMNLQQIGRNYYNPSDPIDIPNHRLVIWPGFTTSILQYENNIMLCTDVSHKVLRSETVLDFMFNLYQQTEEHKFQEQVSKELIGLIVLTKYNNKTYRVDDIDWDQNPKSTFKKADGSEVSFLEYYRKQYNQEITDLKQPVLVSQPKRRRGPGGTLPGPAMLIPELCYLTGLTDKMRNDFNVMKDLAVHTRLTPEQRQREVGRLIDYIHKDDNVQRELRDWGLSFDSNLLSFSGRILQSEKIHQGGKTFDYNPQFADWSKETRGAPLISVKPLDNWLLIYTRRNYEAANSLIQNLFKVTPAMGIQMKKAIMIEVDDRTEAYLRALQQKVTSDTQIVVCLLSSNRKDKYDAIKKYLCTDCPTPSQCVVARTLGKQQTVMAIATKIALQMNCKMGGELWRVDMPLKLAMIVGIDCYHDTTAGRRSIAGFVASINEGMTRWFSRCVFQDRGQELVDGLKVCLQAALRAWSGCNEYMPSRVIVYRDGVGDGQLKTLVNYEVPQFLDCLKSVGRGYNPRLTVIVVKKRVNARFFAQSGGRLQNPLPGTVIDVEVTRPEWYDFFIVSQAVRSGSVSPTHYNVIYDSSGLKPDHIQRLTYKLCHVYYNWPGVIRVPAPCQYAHKLAFLVGQSIHREPNLSLSNRLYYL.

Positions M1–A13 are enriched in basic residues. Residues M1–G48 are disordered. R14 is modified (omega-N-methylarginine; by PRMT5; alternate). R14 is subject to Symmetric dimethylarginine; by PRMT5; alternate. Position 49 is an omega-N-methylarginine; by PRMT5 (R49). R53 carries the omega-N-methylarginine; alternate modification. A Symmetric dimethylarginine; alternate modification is found at R53. Positions R218–N225 match the D-box motif. One can recognise a PAZ domain in the interval T279–G392. The tract at residues T317–R319 is required for binding 2'-O-methylated 3'-end of piRNAs. R371 bears the Omega-N-methylarginine; by PRMT5 mark. Positions S480–E616 are MID region. The 293-residue stretch at I556 to H848 folds into the Piwi domain. Residues D633, E671, D703, and H837 contribute to the active site.

Belongs to the argonaute family. Piwi subfamily. As to quaternary structure, interacts (via Piwi domain) with DICER1, suggesting that it forms ribonucleoprotein RISC complexes; this interaction is regulated by HSP90AB1 activity. Interacts with MAEL, KIF17, PABPC1, PRMT5 and WDR77. Interacts (when methylated on arginine residues) with TDRD1, TDRKH/TDRD2, RNF17/TDRD4, TDRD6, TDRD7 and TDRD9. Interacts with CLOCK. Interacts with MOV10L1. Interacts with ANAPC10; interaction oly takes place following piRNA-binding. Interacts with RNF8; leading to sequester RNF8 in the cytoplasm. Interacts with Tex19.1 and, probably, Tex19.2. It depends on Mg(2+) as a cofactor. In terms of processing, ubiquitinated by the anaphase promoting complex/cyclosome (APC/C) in late spermatids, leading to its degradation. Ubiquitination only takes place following piRNA-binding in adult testis. Ubiquitination and degradation in late spermatogenesis by APC/C is probably required to release RNF8 from the cytoplasm and promote histone to protamine exchange by RNF8. Arginine methylation by PRMT5 is required for the interaction with Tudor domain-containing protein (TDRD1, TDRKH/TDRD2, RNF17/TDRD4, TDRD6, TDRD7 and TDRD9) and subsequent localization to the meiotic nuage, also named P granule. In terms of tissue distribution, expressed in brain. Expressed in testis, specifically in spermatocytes (at protein level). Only detected in germ lineage cells of adult testis. Expressed in male gonads 2 weeks after birth at the initiation of spermatogenesis, but not expressed in female gonads.

Its subcellular location is the cytoplasm. Functionally, endoribonuclease that plays a central role in postnatal germ cells by repressing transposable elements and preventing their mobilization, which is essential for the germline integrity. Acts via the piRNA metabolic process, which mediates the repression of transposable elements during meiosis by forming complexes composed of piRNAs and Piwi proteins and governs the methylation and subsequent repression of transposons. Directly binds methylated piRNAs, a class of 24 to 30 nucleotide RNAs that are generated by a Dicer-independent mechanism and are primarily derived from transposons and other repeated sequence elements. Strongly prefers a uridine in the first position of their guide (g1U preference, also named 1U-bias). Not involved in the piRNA amplification loop, also named ping-pong amplification cycle. Acts as an endoribonuclease that cleaves transposon messenger RNAs. Besides their function in transposable elements repression, piRNAs are probably involved in other processes during meiosis such as translation regulation. Probable component of some RISC complex, which mediates RNA cleavage and translational silencing. Also plays a role in the formation of chromatoid bodies and is required for some miRNAs stability. Required to sequester RNF8 in the cytoplasm until late spermatogenesis; RNF8 being released upon ubiquitination and degradation of PIWIL1. This Mus musculus (Mouse) protein is Piwi-like protein 1.